A 712-amino-acid polypeptide reads, in one-letter code: Satratoxin biosynthesis SC3 cluster transcription factor SAT20 (712 aa).

Composition is skewed to polar residues over residues Met1–Ser10, Cys25–Asn36, Ser131–Leu145, and Ser269–Gly282. Disordered regions lie at residues Met1–Gln43, Ser115–Leu145, and Pro264–Arg294. Residues Cys306 to Cys339 constitute a DNA-binding region (zn(2)-C6 fungal-type). The stretch at Gln530–His560 forms a coiled coil.

The protein localises to the nucleus. In terms of biological role, transcriptional regulator that may regulate the expression of the satratoxin biosynthesis SC3 cluster, one of the 3 clusters involved in the biosynthesis of satratoxins, trichothecene mycotoxins that are associated with human food poisonings. The chain is Satratoxin biosynthesis SC3 cluster transcription factor SAT20 from Stachybotrys chartarum (strain CBS 109288 / IBT 7711) (Toxic black mold).